We begin with the raw amino-acid sequence, 711 residues long: Hydroperoxide isomerase ALOXE3 (711 aa).

A PLAT domain is found at 2 to 119; sequence AVYRLCVTTG…TVELRPGTAR (118 aa). The region spanning 120–711 is the Lipoxygenase domain; the sequence is TICQDSLPLL…PPLIENSVSI (592 aa). Residues His-408, His-413, His-588, Asn-592, and Ile-711 each contribute to the Fe cation site.

The protein belongs to the lipoxygenase family. It depends on Fe cation as a cofactor. Predominantly expressed in skin.

It is found in the cytoplasm. It carries out the reaction a hydroperoxyeicosatetraenoate = a hydroxy-epoxy-eicosatetraenoate. The enzyme catalyses (12R)-hydroperoxy-(5Z,8Z,10E,14Z)-eicosatetraenoate = (8R)-hydroxy-(11R,12R)-epoxy-(5Z,9E,14Z)-eicosatrienoate. It catalyses the reaction (12S)-hydroperoxy-(5Z,8Z,10E,14Z)-eicosatetraenoate = (8R)-hydroxy-(11S,12S)-epoxy-(5Z,9E,14Z)-eicosatrienoate. The catalysed reaction is (12S)-hydroperoxy-(5Z,8Z,10E,14Z)-eicosatetraenoate = (10R)-hydroxy-(11S,12S)-epoxy-(5Z,8Z,14Z)-eicosatrienoate. It carries out the reaction (15S)-hydroperoxy-(5Z,8Z,11Z,13E)-eicosatetraenoate = (13R)-hydroxy-(14S,15S)-epoxy-(5Z,8Z,11Z)-eicosatrienoate. The enzyme catalyses (5S)-hydroperoxy-(6E,8Z,11Z,14Z)-eicosatetraenoate = 7R-hydroxy-5S,6S-epoxy-(8Z,11Z,14Z)-eicosatrienoate. It catalyses the reaction (13S)-hydroperoxy-(9Z,11E)-octadecadienoate = 11-hydroxy-(12S,13S)-epoxy-(9Z)-octadecenoate. The catalysed reaction is N-[omega-(9R)-hydroperoxy-(10E,12Z)-octadecadienoyloxy]acyl-beta-D-glucosyl-(1&lt;-&gt;1)-octadecasphing-4E-enine = a N-[omega-(9R,10R)-epoxy-(13R)-hydroxy-(11E)-octadecenoyloxy]acyl-beta-D-glucosyl-(1&lt;-&gt;1)-sphing-4E-enine. It carries out the reaction a N-[omega-(9R)-hydroperoxy-(10E,12Z)-octadecadienoyloxy]-acylsphin-4E-enine = a N-[omega-(9R,10R)-epoxy-(13R)-hydroxy-(11E)-octadecenoyloxy]-acylsphing-4E-enine. The enzyme catalyses a hydroperoxyeicosatetraenoate = an oxoeicosatetraenoate + H2O. It catalyses the reaction (12R)-hydroperoxy-(5Z,8Z,10E,14Z)-eicosatetraenoate = 12-oxo-(5Z,8Z,10E,14Z)-eicosatetraenoate + H2O. The catalysed reaction is (12S)-hydroperoxy-(5Z,8Z,10E,14Z)-eicosatetraenoate = 12-oxo-(5Z,8Z,10E,14Z)-eicosatetraenoate + H2O. It carries out the reaction (15S)-hydroperoxy-(5Z,8Z,11Z,13E)-eicosatetraenoate = 15-oxo-(5Z,8Z,11Z,13E)-eicosatetraenoate + H2O. The enzyme catalyses (13S)-hydroperoxy-(9Z,11E)-octadecadienoate = 13-oxo-(9Z,11E)-octadecadienoate + H2O. It catalyses the reaction (8S)-hydroperoxy-(5Z,9E,11Z,14Z)-eicosatetraenoate = (10R)-hydroxy-(8S,9S)-epoxy-(5Z,11Z,14Z)-eicosatrienoate. The catalysed reaction is (8R)-hydroperoxy-(5Z,9E,11Z,14Z)-eicosatetraenoate = 8-oxo-(5Z,9E,11Z,14Z)-eicosatetraenoate + H2O. It carries out the reaction (8S)-hydroperoxy-(5Z,9E,11Z,14Z)-eicosatetraenoate = 8-oxo-(5Z,9E,11Z,14Z)-eicosatetraenoate + H2O. Its pathway is lipid metabolism; hydroperoxy eicosatetraenoic acid biosynthesis. It functions in the pathway lipid metabolism; sphingolipid metabolism. Its activity is regulated as follows. Lipoxygenase activity is activated by 13(S)-HPODE leading to an active free ferric enzyme. The lipoxygenase and hydroperoxide isomerase activities are in competition and are reciprocally regulated by oxygen. The oxygen reacts with an epoxyallylic radical intermediate leading to an epoxyallylic peroxyl radical, which, due to its limited reactivity within the enzyme active site, it dissociates and leaves the enzyme in the activated free ferric state. Non-heme iron-containing lipoxygenase which is atypical in that it displays a prominent hydroperoxide isomerase activity and a reduced lipoxygenases activity. The hydroperoxide isomerase activity catalyzes the isomerization of hydroperoxides, derived from arachidonic and linoleic acid by ALOX12B, into hepoxilin-type epoxyalcohols and ketones. In presence of oxygen, oxygenates polyunsaturated fatty acids, including arachidonic acid, to produce fatty acid hydroperoxides. In the skin, acts downstream of ALOX12B on the linoleate moiety of esterified omega-hydroxyacyl-sphingosine (EOS) ceramides to produce an epoxy-ketone derivative, a crucial step in the conjugation of omega-hydroxyceramide to membrane proteins. Therefore plays a crucial role in the synthesis of corneocytes lipid envelope and the establishment of the skin barrier to water loss. In parallel, it may have a signaling function in barrier formation through the production of hepoxilins metabolites. Also plays a role in adipocyte differentiation through hepoxilin A3 and hepoxilin B3 production which in turn activate PPARG. Through the production of hepoxilins in the spinal cord, it may regulate inflammatory tactile allodynia. The sequence is that of Hydroperoxide isomerase ALOXE3 from Homo sapiens (Human).